Consider the following 427-residue polypeptide: Large ribosomal subunit protein uL4 (427 aa).

The residue at position 2 (A2) is an N-acetylalanine. K14 carries the N6-acetyllysine modification. R97 is subject to Omega-N-methylarginine. K106 carries the N6-acetyllysine modification. K239 is covalently cross-linked (Glycyl lysine isopeptide (Lys-Gly) (interchain with G-Cter in SUMO2)). N6-acetyllysine is present on K259. Position 266 is a phosphothreonine (T266). S290 and S295 each carry phosphoserine. The residue at position 300 (R300) is a Citrulline. A Glycyl lysine isopeptide (Lys-Gly) (interchain with G-Cter in SUMO2) cross-link involves residue K327. N6-acetyllysine is present on residues K333 and K353. An N6-acetyllysine; alternate modification is found at K364. Residue K364 forms a Glycyl lysine isopeptide (Lys-Gly) (interchain with G-Cter in SUMO1); alternate linkage. Phosphoserine is present on S365. The disordered stretch occupies residues 369-427 (AAVAGKKPVVGKKGKKAAVGVKKQKKPLVGKKAAATKKPAPEKKPAEKKPTTEEKKPAA). The span at 377–397 (VVGKKGKKAAVGVKKQKKPLV) shows a compositional bias: basic residues. Residues 407 to 427 (PAPEKKPAEKKPTTEEKKPAA) are compositionally biased toward basic and acidic residues.

It belongs to the universal ribosomal protein uL4 family. Component of the large ribosomal subunit. May bind IPO9 with low affinity. Interacts with RBM3. Citrullinated by PADI4.

It localises to the cytoplasm. Functionally, component of the large ribosomal subunit. The ribosome is a large ribonucleoprotein complex responsible for the synthesis of proteins in the cell. This Pongo abelii (Sumatran orangutan) protein is Large ribosomal subunit protein uL4 (RPL4).